The chain runs to 638 residues: Phenylethylamine oxidase (638 aa).

The propeptide occupies 1-2 (MT). 296 to 307 (YFDTGEYLVGQY) contributes to the substrate binding site. Residue D298 is the Proton acceptor of the active site. C317 and C343 are oxidised to a cystine. 379–384 (IGNYDY) is a binding site for substrate. Y382 functions as the Schiff-base intermediate with substrate; via topaquinone in the catalytic mechanism. Y382 carries the post-translational modification 2',4',5'-topaquinone. The Cu cation site is built by H431, H433, and H592.

This sequence belongs to the copper/topaquinone oxidase family. Homodimer. Requires Cu cation as cofactor. The cofactor is L-topaquinone. In terms of processing, topaquinone (TPQ) is generated by copper-dependent autoxidation of a specific tyrosyl residue.

The catalysed reaction is a primary methyl amine + O2 + H2O = an aldehyde + H2O2 + NH4(+). It carries out the reaction 2-phenylethylamine + O2 + H2O = 2-phenylacetaldehyde + H2O2 + NH4(+). Its function is as follows. Catalyzes the oxidative deamination of phenylethylamine to phenylacetaldehyde with the concomitant production of hydrogen peroxide and ammonia. The chain is Phenylethylamine oxidase from Arthrobacter globiformis.